Here is a 1783-residue protein sequence, read N- to C-terminus: Collagen alpha-1(XXVII) chain A (1783 aa).

An N-terminal signal peptide occupies residues 1–35 (MNLATRRRVRRTSRLVAKRALLLCILLYCTSFGFT). One can recognise a Laminin G-like domain in the interval 73-235 (TTRARVTTPT…NICSAIRRQC (163 aa)). 5 disordered regions span residues 288–312 (SSSVRMSDGVRPKPSSTTPPPLALM), 327–524 (HKPS…PRTP), 553–744 (VGAP…APGP), 772–1461 (PGNM…GDIG), and 1512–1546 (GNPGSRGDTGNKGELGVQGPRGAPGPRGPPGLPGP). Over residues 403–415 (KPTSVPKPNPTKN) the composition is skewed to low complexity. Over residues 436–447 (LPAPKPTVPKRP) the composition is skewed to pro residues. Residues 462–494 (HTTPLTPKSTLAPNSTSKKPLPTLKSTSFTTAA) are compositionally biased toward polar residues. The segment at 553 to 1547 (VGAPGLKGDQ…RGPPGLPGPP (995 aa)) is triple-helical region. The 55-residue stretch at 554–608 (GAPGLKGDQGESGLPGPPGKPGQPGMRGPRGPPGPHGKPGRPGPTGLKGKKGDPG) folds into the Collagen-like 1 domain. Low complexity-rich tracts occupy residues 622 to 633 (VGLPGPVGLVGV), 651 to 661 (EPGEQGPVGEA), 735 to 744 (EPGVIGAPGP), 817 to 829 (PGPQGKTGEIGPS), and 861 to 870 (ARGLPGPRGA). 2 consecutive Collagen-like domains span residues 818 to 873 (GPQG…AAGR) and 845 to 902 (GKPG…GALG). Over residues 926 to 935 (GFIGPGGEAG) the composition is skewed to gly residues. A compositionally biased stretch (pro residues) spans 967–976 (GGPPGPPGSP). Composition is skewed to low complexity over residues 978 to 988 (SPGSRGPIGIR) and 1098 to 1129 (SIGLAGNAGAAGLIGARGEPGLEGEAGPAGPD). A Collagen-like 4 domain is found at 986–1043 (GIRGPKGRRGPRGPDGVPGEIGTEGKKGPDGPPGKIGFPGHAGKIGESGEVGPKGFPG). Basic and acidic residues-rich tracts occupy residues 1131 to 1158 (TKGEKGDMGTEGEQGVRGDPGIKGKDGP), 1170 to 1182 (PEGKSGKSGERGK), and 1257 to 1267 (AKGEQGDDGKV). Positions 1269-1326 (GPTGAPGLRGPVGKRGDRGEPGDPGYVGQQGVDGLRGKPGAPGLPGDPGPRGTQGPKG) constitute a Collagen-like 5 domain. 2 stretches are compositionally biased toward low complexity: residues 1334–1349 (KGKQGQQGERGSRGSP) and 1396–1409 (LPGKPGAPGKVGVI). Collagen-like domains are found at residues 1446 to 1503 (GPQG…GLAG) and 1497 to 1549 (GRGG…PPGI). The span at 1537 to 1546 (PRGPPGLPGP) shows a compositional bias: pro residues. Positions 1551 to 1783 (LAMNQDFGLG…HLEVGPVCFL (233 aa)) are cleaved as a propeptide — C-terminal propeptide. Residues 1589 to 1783 (PEILRTLDYL…HLEVGPVCFL (195 aa)) enclose the Fibrillar collagen NC1 domain. 3 disulfides stabilise this stretch: cysteine 1619-cysteine 1651, cysteine 1660-cysteine 1781, and cysteine 1696-cysteine 1734. Ca(2+) contacts are provided by aspartate 1637, asparagine 1639, cysteine 1642, and aspartate 1645. An N-linked (GlcNAc...) asparagine glycan is attached at asparagine 1698.

Belongs to the fibrillar collagen family. Expressed dynamically in the notochord from late epiboly, spreading to the anterior notochord by 24 hpf, and then throughout the notochord by 30 hpf. Subsequently, notochordal expression becomes restricted to the distal tip of the tail by 48 hpf and is no longer detectable by 72 hpf. Also expressed throughout the floor plate and hypochord at 24 hpf, and in forming head cartilages and the first forming tooth.

Its subcellular location is the secreted. The protein resides in the extracellular space. The protein localises to the extracellular matrix. Functionally, may play a role during the calcification of cartilage and the transition of cartilage to bone. Together with col27a1b, plays a role in development of the notochord and axial skeleton. This Danio rerio (Zebrafish) protein is Collagen alpha-1(XXVII) chain A.